The primary structure comprises 140 residues: 3-hydroxyacyl-[acyl-carrier-protein] dehydratase FabZ (140 aa).

The active site involves His-48.

Belongs to the thioester dehydratase family. FabZ subfamily.

The protein resides in the cytoplasm. The enzyme catalyses a (3R)-hydroxyacyl-[ACP] = a (2E)-enoyl-[ACP] + H2O. Its function is as follows. Involved in unsaturated fatty acids biosynthesis. Catalyzes the dehydration of short chain beta-hydroxyacyl-ACPs and long chain saturated and unsaturated beta-hydroxyacyl-ACPs. This Oceanobacillus iheyensis (strain DSM 14371 / CIP 107618 / JCM 11309 / KCTC 3954 / HTE831) protein is 3-hydroxyacyl-[acyl-carrier-protein] dehydratase FabZ.